The chain runs to 357 residues: Transcription factor unc-86 (357 aa).

A POU-IV box motif is present at residues 35 to 44; it reads RAAQVALADI. Positions 155–232 constitute a POU-specific domain; it reads DMDTDPRQLE…ILHSWLEKAE (78 aa). A DNA-binding region (homeobox) is located at residues 253 to 312; sequence KKRKRTSIAAPEKRELEQFFKQQPRPSGERIASIADRLDLKKNVVRVWFCNQRQKQKRDF.

The protein belongs to the POU transcription factor family. Class-4 subfamily. As to quaternary structure, interacts with mec-3; the heterooligomer binds to the promoters of mec-3, mec-4 and mec-7. In terms of tissue distribution, specific to neurons and neuroblasts. Expressed in CEM head neurons and in IL2, URA, URB, URX and URY neurons. Not expressed in olfactory sensory neurons but expressed in AIZ interneurons.

Its subcellular location is the nucleus. In terms of biological role, transcription factor required for correct cell fate determination and differentiation in diverse neuronal cell lineages where it plays a role in specifying the fate of daughter cells during cell divisions. Involved in sensory neuron production and function. Binds both alone and with mec-3 to the mec-3 promoter to initiate and maintain mec-3 expression which is required for sensory neuron differentiation. In addition, binds both alone and with mec-3 to the promoters of mec-4 and mec-7 which act to regulate sensory neuron function. Involved in determining the identity of the serotonergic NSM neurons and the cholinergic IL2 sensory and URA motor neurons. Promotes expression of the cfi-1 transcription factor in the URA and IL2 neurons which in turn activates normal URA and IL2 gene expression. Required to determine the identity of BDU sensory neurons in concert with transcription factor unc-86, regulating expression of a number of genes, including transcription factors ceh-14 and ahr-1, neuropeptides flp-10, nlp-1 and nlp-15, and tyramine receptor-encoding ser-2. Regulates expression of a number of genes in NSM neurons including bas-1, cat-1, dop-3, mgl-3, nlp-13, scd-2 and ptps-1. In the IL2 neurons, required for expression of cho-1, gcy-19, klp-6, lag-2, unc-5 and unc-17. Promotes expression of pkd-2 in the male-specific CEM head neurons. Required for dauer-specific branching of IL2Q neurons and nictation behavior. Controls both the timing and direction of axon outgrowth in HSN neurons. Plays a role in serotonin production by regulating expression of the tryptophan hydrolase tph-1 which catalyzes serotonin synthesis, in the AIM, NSM, HSN and RIH neurons. Involved in regulation of lin-11 expression in the AIZ interneurons, the major interneurons of the olfactory pathway, and is required for odortaxis behavior. Involved in neurite pruning between AIM neurons during larval development by regulating the expression of transcription factor mbr-1. Required for correct localization of unc-40. The protein is Transcription factor unc-86 (unc-86) of Caenorhabditis elegans.